A 691-amino-acid polypeptide reads, in one-letter code: CREB-regulated transcription coactivator 2 (691 aa).

The segment covering 1–20 has biased composition (polar residues); sequence MATSGANGPGSATASASNPR. The interval 1 to 30 is disordered; the sequence is MATSGANGPGSATASASNPRKFSEKIALQK. Alanine 2 carries the N-acetylalanine modification. Residue arginine 51 is modified to Asymmetric dimethylarginine; by PRMT6. Phosphoserine occurs at positions 70, 86, and 90. An asymmetric dimethylarginine; by PRMT6 mark is found at arginine 99, arginine 120, and arginine 123. Position 136 is a phosphoserine (serine 136). 2 positions are modified to asymmetric dimethylarginine; by PRMT6: arginine 161 and arginine 168. Threonine 169 bears the Phosphothreonine mark. Residue serine 171 is modified to Phosphoserine; by AMPK, MARK2, SIK1 and SIK2. The span at 174 to 186 shows a compositional bias: polar residues; that stretch reads ALHTSVMNPNPQD. Residues 174-195 form a disordered region; the sequence is ALHTSVMNPNPQDTYPGPTPPS. Position 192 is a phosphothreonine (threonine 192). Residue lysine 234 forms a Glycyl lysine isopeptide (Lys-Gly) (interchain with G-Cter in SUMO2) linkage. The short motif at 271–287 is the Nuclear export signal element; that stretch reads TGGSLPDLTNLHFPPPL. At serine 274 the chain carries Phosphoserine; by MARK2. Disordered stretches follow at residues 280 to 306 and 335 to 491; these read NLHF…GGNS and HSPL…YSPP. Serine 306, serine 368, serine 393, serine 433, and serine 456 each carry phosphoserine. Low complexity-rich tracts occupy residues 335 to 383 and 390 to 411; these read HSPL…HALP and PSLS…SPVL. Residues 447 to 468 show a composition bias toward polar residues; the sequence is SQQQLPKQFSPTMSPTLSSITQ. A Phosphotyrosine modification is found at tyrosine 488. Residues serine 489 and serine 492 each carry the phosphoserine modification. A Phosphothreonine modification is found at threonine 501. Positions 513–543 are disordered; that stretch reads CLVQPSGGQPPGRQPHYGTLYPPGSSGHGQQ. Serine 611, serine 621, and serine 622 each carry phosphoserine.

The protein belongs to the TORC family. In terms of assembly, binds, as a tetramer, through its N-terminal region, with the bZIP domain of CREB1. 'Arg-314' in the bZIP domain of CREB1 is essential for this interaction. Interaction, via its C-terminal, with TAF4, enhances recruitment of TAF4 to CREB1. Interacts with SIK2. Interacts with 14-3-3 proteins, YWHAB and YWHAG. Interacts (probably when phosphorylated at Ser-171) with YWHAE. Interacts with calmodulin-dependent catalytic subunit PPP3CA/calcineurin A. Interaction with COP1 mediates nuclear export and degradation of CRTC2. Post-translationally, phosphorylation/dephosphorylation states of Ser-171 are required for regulating transduction of CREB activity. CRTCs/TORCs are inactive when phosphorylated, and active when dephosphorylated at this site. This primary site of phosphorylation, is regulated by cAMP and calcium levels and is dependent on the phosphorylation of SIKs (SIK1 and SIK2) by LKB1. Following adenylyl cyclase activation, dephosphorylated at Ser-171 by PPP3CA/calcineurin A resulting in CRTC2 dissociation from 14-3-3 proteins and PPP3CA. Both insulin and AMPK increase this phosphorylation of CRTC2 while glucagon suppresses it. Phosphorylation at Ser-274 by MARK2 is induced under low glucose conditions and dephosphorylated in response to glucose influx. Phosphorylation at Ser-274 promotes interaction with 14-3-3 proteins and translocation to the cytoplasm. In terms of processing, asymmetric dimethylation of arginine resisues by PRMT6 enhances the association of CRTC2 with CREB on the promoters of gluconeogenic genes.

The protein resides in the cytoplasm. The protein localises to the nucleus. Transcriptional coactivator for CREB1 which activates transcription through both consensus and variant cAMP response element (CRE) sites. Acts as a coactivator, in the SIK/TORC signaling pathway, being active when dephosphorylated and acts independently of CREB1 'Ser-133' phosphorylation. Enhances the interaction of CREB1 with TAF4. Regulates gluconeogenesis as a component of the LKB1/AMPK/TORC2 signaling pathway. Regulates the expression of specific genes such as the steroidogenic gene, StAR. Potent coactivator of PPARGC1A and inducer of mitochondrial biogenesis in muscle cells. This Rattus norvegicus (Rat) protein is CREB-regulated transcription coactivator 2 (Crtc2).